The sequence spans 461 residues: Argininosuccinate lyase (461 aa).

Belongs to the lyase 1 family. Argininosuccinate lyase subfamily.

It is found in the cytoplasm. The enzyme catalyses 2-(N(omega)-L-arginino)succinate = fumarate + L-arginine. It functions in the pathway amino-acid biosynthesis; L-arginine biosynthesis; L-arginine from L-ornithine and carbamoyl phosphate: step 3/3. The polypeptide is Argininosuccinate lyase (Dehalococcoides mccartyi (strain CBDB1)).